The primary structure comprises 42 residues: Histone H1B (42 aa).

Residues 1-42 (TYYELIKAAILALKERNGSSAQAIKKYILENNKIEFQQTFLR) form the H15 domain.

The protein belongs to the histone H1/H5 family.

It localises to the nucleus. The protein localises to the chromosome. Functionally, histones H1 are necessary for the condensation of nucleosome chains into higher-order structures. In Olisthodiscus luteus (Marine phytoflagellate), this protein is Histone H1B.